The sequence spans 287 residues: Transcription cofactor vestigial-like protein 4 (287 aa).

Disordered stretches follow at residues 44–68 (ASALSSHRTGPPPISPSKRKFSMEP) and 251–287 (AAKDSASSSPESASRRGQPASPTAHMVSHSHSPSVVS). Residues Ser-58 and Ser-271 each carry the phosphoserine modification. The span at 275 to 287 (HMVSHSHSPSVVS) shows a compositional bias: low complexity.

This sequence belongs to the vestigial family. In terms of assembly, interacts with TEFs. Interacts with IRF2BP2.

It localises to the nucleus. In terms of biological role, may act as a specific coactivator for the mammalian TEFs. The protein is Transcription cofactor vestigial-like protein 4 (Vgll4) of Mus musculus (Mouse).